The primary structure comprises 51 residues: Cuticle protein CP575 (51 aa).

The 51-residue stretch at 1–51 (GDIIDVDNDLFEHEQDGVAGTSVHGEYEAYDAYGNEYEVKYIADHLGFRVL) folds into the Chitin-binding type R&amp;R domain.

In terms of tissue distribution, calcified shell.

This chain is Cuticle protein CP575, found in Cancer pagurus (Rock crab).